Reading from the N-terminus, the 150-residue chain is uncharacterized protein (150 aa).

Helical transmembrane passes span 50–70 (VVSVILTLRGYVQLGYMVIHL), 80–100 (LYITITHYTIYIVNIVIQLWL), and 127–147 (KVVIRFYFHFYFFFSFLFFIE).

The protein resides in the membrane. This is an uncharacterized protein from Schizosaccharomyces pombe (strain 972 / ATCC 24843) (Fission yeast).